The following is a 340-amino-acid chain: 4-amino-5-hydroxymethyl-2-methylpyrimidine phosphate synthase THI11 (340 aa).

Lys62 is subject to N6-(pyridoxal phosphate)lysine. His66 is an active-site residue. Pyridoxal 5'-phosphate is bound at residue Gly115–Gly118. The short motif at Cys195–Cys199 is the CCCFC; essential for catalytic activity, may be the site of iron coordination element.

It belongs to the NMT1/THI5 family. Homodimer. It depends on Fe cation as a cofactor.

The catalysed reaction is N(6)-(pyridoxal phosphate)-L-lysyl-[4-amino-5-hydroxymethyl-2-methylpyrimidine phosphate synthase] + L-histidyl-[4-amino-5-hydroxymethyl-2-methylpyrimidine phosphate synthase] + 2 Fe(3+) + 4 H2O = L-lysyl-[4-amino-5-hydroxymethyl-2-methylpyrimidine phosphate synthase] + (2S)-2-amino-5-hydroxy-4-oxopentanoyl-[4-amino-5-hydroxymethyl-2-methylpyrimidine phosphate synthase] + 4-amino-2-methyl-5-(phosphooxymethyl)pyrimidine + 3-oxopropanoate + 2 Fe(2+) + 2 H(+). The protein operates within cofactor biosynthesis; thiamine diphosphate biosynthesis. In terms of biological role, responsible for the formation of the pyrimidine heterocycle in the thiamine biosynthesis pathway. Catalyzes the formation of hydroxymethylpyrimidine phosphate (HMP-P) from histidine and pyridoxal phosphate (PLP). The protein uses PLP and the active site histidine to form HMP-P, generating an inactive enzyme. The enzyme can only undergo a single turnover, which suggests it is a suicide enzyme. The chain is 4-amino-5-hydroxymethyl-2-methylpyrimidine phosphate synthase THI11 from Saccharomyces cerevisiae (strain ATCC 204508 / S288c) (Baker's yeast).